The following is a 631-amino-acid chain: Hepatocyte nuclear factor 1-alpha (631 aa).

The segment at 1 to 31 (MVSKLSQLQTELLAALLESGLSKEALIQALG) is dimerization. In terms of domain architecture, HNF-p1 spans 1 to 32 (MVSKLSQLQTELLAALLESGLSKEALIQALGE). A disordered region spans residues 40-81 (GEGPLDKGESCGGGRGELAELPNGLGETRGSEDETDDDGEDF). Serine 70 is modified (phosphoserine). Threonine 74 carries the post-translational modification Phosphothreonine. In terms of domain architecture, POU-specific atypical spans 87–182 (KELENLSPEE…VAQQFTHAGQ (96 aa)). Serine 93 is subject to Phosphoserine. A Glycyl lysine isopeptide (Lys-Gly) (interchain with G-Cter in ubiquitin) cross-link involves residue lysine 117. Interaction with DNA regions lie at residues 130-132 (QRE), 143-149 (HLSQHLN), 155-158 (KTQK), and 203-206 (RFKW). The segment at 183–205 (GGLIEEPTGDELPTKKGRRNRFK) is disordered. Residues 197–205 (KKGRRNRFK) carry the Nuclear localization signal motif. Residues 199–279 (GRRNRFKWGP…NRRKEEAFRH (81 aa)) constitute a DNA-binding region (homeobox; HNF1-type). Serine 247 is modified (phosphoserine). Interaction with DNA stretches follow at residues 263 to 265 (RVY) and 270 to 273 (NRRK). Disordered regions lie at residues 283–358 (MDTY…GLEP) and 545–567 (SDTE…TLHV). Positions 288-298 (GPPPGPGPGPA) are enriched in pro residues. The residue at position 313 (serine 313) is a Phosphoserine. The span at 325 to 353 (PATSETAEVPSSSGGPLVTVSTPLHQVSP) shows a compositional bias: polar residues.

This sequence belongs to the HNF1 homeobox family. In terms of assembly, binds DNA as a dimer. Heterotetramer with PCBD1; formed by a dimer of dimers. Interacts with PCBD1. Interacts with BHLHE41. Interacts with NR5A2. Interacts with SPOP; this interaction promotes ubiquitination and degradation of HNF1A. Ubiquitinated in s SPOP-dependent manner; leading to prteasomal degradation. In terms of tissue distribution, liver.

It localises to the nucleus. Transcriptional activator that regulates the tissue specific expression of multiple genes, especially in pancreatic islet cells and in liver. Binds to the inverted palindrome 5'-GTTAATNATTAAC-3'. Activates the transcription of CYP1A2, CYP2E1 and CYP3A11. Functionally, (Microbial infection) Plays a crucial role for hepatitis B virus gene transcription and DNA replication. Mechanistically, synergistically cooperates with NR5A2 to up-regulate the activity of one of the critical cis-elements in the hepatitis B virus genome enhancer II (ENII). The polypeptide is Hepatocyte nuclear factor 1-alpha (HNF1A) (Homo sapiens (Human)).